A 470-amino-acid polypeptide reads, in one-letter code: E3 SUMO-protein ligase EGR2 (470 aa).

Low complexity predominate over residues 126–141 (PPASTTASSSVTSASP). 3 disordered regions span residues 126-153 (PPASTTASSSVTSASPNPLATGPLGVCT), 159-178 (PELDHLYSPPPPPPPYSGCT), and 185-210 (PSAFLSPPSTTSTSSLAYQPPPSYPS). The span at 190 to 202 (SPPSTTSTSSLAY) shows a compositional bias: low complexity. Lys-247 is modified (N6-acetyllysine; by EP300). A compositionally biased stretch (gly residues) spans 275 to 291 (GPGAGVTGPGASGGGEG). The disordered stretch occupies residues 275–345 (GPGAGVTGPG…PYPCPAEGCD (71 aa)). 3 C2H2-type zinc fingers span residues 337–361 (YPCPAEGCDRRFSRSDELTRHIRIH), 367–389 (FQCRICMRNFSRSDHLTTHIRTH), and 395–417 (FACDYCGRKFARSDERKRHTKIH). The segment at 408–470 (DERKRHTKIH…ASCTSRTRTP (63 aa)) is disordered. The span at 412-422 (RHTKIHLRQKE) shows a compositional bias: basic residues. Residues 426–439 (SAPSAPPSAQSSAS) are compositionally biased toward low complexity. A compositionally biased stretch (gly residues) spans 440 to 450 (GPGGSQAGGSL).

It belongs to the EGR C2H2-type zinc-finger protein family. In terms of assembly, interacts with HCFC1. Interacts with WWP2. Interacts with UBC9. Interacts with CITED1. Interacts (via phosphorylated form) with SFN. Post-translationally, ubiquitinated by WWP2 leading to proteasomal degradation. In terms of processing, acetylated at Lys-247. May be deacetylated by HDAC6, HDAC10 or SIRT1. In terms of tissue distribution, expressed mainly in the thymus.

It localises to the nucleus. Its pathway is protein modification; protein sumoylation. Functionally, sequence-specific DNA-binding transcription factor. Plays a role in hindbrain segmentation by regulating the expression of a subset of homeobox containing genes and in Schwann cell myelination by regulating the expression of genes involved in the formation and maintenance of myelin. Binds to two EGR2-consensus sites EGR2A (5'-CTGTAGGAG-3') and EGR2B (5'-ATGTAGGTG-3') in the HOXB3 enhancer and promotes HOXB3 transcriptional activation. Binds to specific DNA sites located in the promoter region of HOXA4, HOXB2 and ERBB2. Regulates hindbrain segmentation by controlling the expression of Hox genes, such as HOXA4, HOXB3 and HOXB2, and thereby specifying odd and even rhombomeres. Promotes the expression of HOXB3 in the rhombomere r5 and of HOXB3 in r3 and r5 in the hindbrain. Regulates myelination in the peripheral nervous system after birth, possibly by regulating the expression of myelin proteins, such as MPZ, and by promoting the differentiation of Schwann cells. Involved in the development of the jaw openener musculature, probably by playing a role in its innervation through trigeminal motor neurons. May play a role in adipogenesis, possibly by regulating the expression of CEBPB. E3 SUMO-protein ligase helping SUMO1 conjugation to its coregulators NAB1 and NAB2, whose sumoylation down-regulates EGR2 transcriptional activity. In Mus musculus (Mouse), this protein is E3 SUMO-protein ligase EGR2 (Egr2).